Consider the following 756-residue polypeptide: Protein SDA1 homolog (756 aa).

A coiled-coil region spans residues 227–282 (EEEEDEAVKEKRAKDNFRKKSLAHRVGKKTKGRITRLAKSKVDLKKAKQEEDNKLQ). Composition is skewed to acidic residues over residues 494–514 (AGEE…EGWE) and 521–596 (ADDD…EEEE). Disordered stretches follow at residues 494 to 615 (AGEE…VLRT) and 638 to 756 (AREN…RGRH). The segment covering 605 to 615 (QQKEKVEVLRT) has biased composition (basic and acidic residues). Residues 647-656 (DMDQDDDENG) are compositionally biased toward acidic residues. Basic and acidic residues predominate over residues 677–691 (EEKLERIARAKEGRD). The segment covering 725 to 735 (KTKKVRGKSLK) has biased composition (basic residues). Positions 736-749 (SFRDKQIGQREHSA) are enriched in basic and acidic residues.

The protein belongs to the SDA1 family.

Its subcellular location is the nucleus. It localises to the nucleolus. Functionally, required for 60S pre-ribosomal subunits export to the cytoplasm. In Dictyostelium discoideum (Social amoeba), this protein is Protein SDA1 homolog (sdad1).